The primary structure comprises 205 residues: N-(5'-phosphoribosyl)anthranilate isomerase (205 aa).

Belongs to the TrpF family.

The catalysed reaction is N-(5-phospho-beta-D-ribosyl)anthranilate = 1-(2-carboxyphenylamino)-1-deoxy-D-ribulose 5-phosphate. Its pathway is amino-acid biosynthesis; L-tryptophan biosynthesis; L-tryptophan from chorismate: step 3/5. The protein is N-(5'-phosphoribosyl)anthranilate isomerase of Clostridium acetobutylicum (strain ATCC 824 / DSM 792 / JCM 1419 / IAM 19013 / LMG 5710 / NBRC 13948 / NRRL B-527 / VKM B-1787 / 2291 / W).